A 195-amino-acid polypeptide reads, in one-letter code: Peptidyl-tRNA hydrolase (195 aa).

Tyrosine 17 is a binding site for tRNA. The active-site Proton acceptor is histidine 22. TRNA-binding residues include phenylalanine 68, asparagine 70, and asparagine 116.

Belongs to the PTH family. Monomer.

Its subcellular location is the cytoplasm. It catalyses the reaction an N-acyl-L-alpha-aminoacyl-tRNA + H2O = an N-acyl-L-amino acid + a tRNA + H(+). In terms of biological role, hydrolyzes ribosome-free peptidyl-tRNAs (with 1 or more amino acids incorporated), which drop off the ribosome during protein synthesis, or as a result of ribosome stalling. Its function is as follows. Catalyzes the release of premature peptidyl moieties from peptidyl-tRNA molecules trapped in stalled 50S ribosomal subunits, and thus maintains levels of free tRNAs and 50S ribosomes. The protein is Peptidyl-tRNA hydrolase of Erwinia tasmaniensis (strain DSM 17950 / CFBP 7177 / CIP 109463 / NCPPB 4357 / Et1/99).